Reading from the N-terminus, the 83-residue chain is Large ribosomal subunit protein eL14 (83 aa).

This sequence belongs to the eukaryotic ribosomal protein eL14 family.

The sequence is that of Large ribosomal subunit protein eL14 from Thermococcus gammatolerans (strain DSM 15229 / JCM 11827 / EJ3).